The following is a 152-amino-acid chain: Peptide deformylase (152 aa).

Fe cation is bound by residues C91 and H133. E134 is an active-site residue. Position 137 (H137) interacts with Fe cation.

Belongs to the polypeptide deformylase family. It depends on Fe(2+) as a cofactor.

The enzyme catalyses N-terminal N-formyl-L-methionyl-[peptide] + H2O = N-terminal L-methionyl-[peptide] + formate. Its function is as follows. Removes the formyl group from the N-terminal Met of newly synthesized proteins. Requires at least a dipeptide for an efficient rate of reaction. N-terminal L-methionine is a prerequisite for activity but the enzyme has broad specificity at other positions. This chain is Peptide deformylase, found in Wigglesworthia glossinidia brevipalpis.